Reading from the N-terminus, the 608-residue chain is ABC transporter ATP-binding protein RamB (608 aa).

5 helical membrane passes run 25–45 (GVLV…FLVG), 66–86 (LWLG…RGVF), 141–161 (GLVL…LGLL), 166–186 (ALLV…LVTL), and 253–273 (AALG…VEWL). The ABC transmembrane type-1 domain occupies 30–296 (LALWSLAESG…FTYLVQSLLP (267 aa)). The disordered stretch occupies residues 321–362 (GPEPEPEPEPEPEPEPELGSGLEPEPEPASEPESGPSTASAS). Positions 324-336 (PEPEPEPEPEPEP) are enriched in acidic residues. Residues 351–362 (EPESGPSTASAS) show a composition bias toward low complexity. The 230-residue stretch at 376 to 605 (VELRSVTLSY…SPLYRDLTGH (230 aa)) folds into the ABC transporter domain. 410 to 417 (GPSGIGKS) is an ATP binding site.

This sequence belongs to the ABC transporter superfamily.

The protein resides in the cell membrane. Functionally, probably involved in exporting SapB from the cell. Expression of the ram locus (ramA, ramB and ramR) induces rapid aerial mycelium formation in S.lividans. The chain is ABC transporter ATP-binding protein RamB from Streptomyces coelicolor (strain ATCC BAA-471 / A3(2) / M145).